The sequence spans 367 residues: Probable cinnamyl alcohol dehydrogenase (367 aa).

Residue C47 coordinates Zn(2+). T49 provides a ligand contact to NADP(+). Residues H69, E70, C100, C103, C106, C114, and C163 each coordinate Zn(2+). NADP(+)-binding positions include T167, 188–193 (GLGGVG), 211–216 (SSSSKK), T251, G275, and 298–300 (SFI).

Belongs to the zinc-containing alcohol dehydrogenase family. As to quaternary structure, homodimer. Requires Zn(2+) as cofactor.

The enzyme catalyses (E)-cinnamyl alcohol + NADP(+) = (E)-cinnamaldehyde + NADPH + H(+). The catalysed reaction is (E)-coniferol + NADP(+) = (E)-coniferaldehyde + NADPH + H(+). It catalyses the reaction (E)-sinapyl alcohol + NADP(+) = (E)-sinapaldehyde + NADPH + H(+). It carries out the reaction (E)-4-coumaroyl alcohol + NADP(+) = (E)-4-coumaraldehyde + NADPH + H(+). The enzyme catalyses (E)-caffeyl alcohol + NADP(+) = (E)-caffeyl aldehyde + NADPH + H(+). The protein operates within aromatic compound metabolism; phenylpropanoid biosynthesis. Involved in lignin biosynthesis. May catalyze the final step specific for the production of lignin monomers, like coniferyl alcohol, sinapyl alcohol and 4-coumaryl alcohol. In Zea mays (Maize), this protein is Probable cinnamyl alcohol dehydrogenase.